The chain runs to 260 residues: 5'-nucleotidase SurE (260 aa).

4 residues coordinate a divalent metal cation: Asp-10, Asp-11, Ser-41, and Asn-95.

This sequence belongs to the SurE nucleotidase family. Requires a divalent metal cation as cofactor.

The protein resides in the cytoplasm. It catalyses the reaction a ribonucleoside 5'-phosphate + H2O = a ribonucleoside + phosphate. Its function is as follows. Nucleotidase that shows phosphatase activity on nucleoside 5'-monophosphates. This is 5'-nucleotidase SurE from Methanoregula boonei (strain DSM 21154 / JCM 14090 / 6A8).